We begin with the raw amino-acid sequence, 284 residues long: uncharacterized protein (284 aa).

An N-terminal signal peptide occupies residues Met-1–Ala-20. Positions Cys-38–Cys-121 constitute an Apple domain. Disulfide bonds link Cys-38–Cys-121, Cys-63–Cys-89, and Cys-67–Cys-77. Residue Asn-256 is glycosylated (N-linked (GlcNAc...) asparagine). The chain crosses the membrane as a helical span at residues Ser-264–Leu-284.

It is found in the membrane. This is an uncharacterized protein from Caenorhabditis elegans.